We begin with the raw amino-acid sequence, 108 residues long: UPF0102 protein Sden_0272 (108 aa).

Belongs to the UPF0102 family.

The chain is UPF0102 protein Sden_0272 from Shewanella denitrificans (strain OS217 / ATCC BAA-1090 / DSM 15013).